A 348-amino-acid chain; its full sequence is Short-chain dehydrogenase fogG (348 aa).

NADP(+) contacts are provided by L51, R75, D100, and N126. Residues S180 and Y215 each act as proton donor in the active site. NADP(+)-binding residues include Y215 and K219. Catalysis depends on K219, which acts as the Lowers pKa of active site Tyr.

Belongs to the short-chain dehydrogenases/reductases (SDR) family.

It functions in the pathway secondary metabolite biosynthesis. Short-chain dehydrogenase; part of the gene cluster that mediates the biosynthesis of flavoglaucin and congeners (including aspergin, dihydroauroglaucin and auroglaucin), prenylated salicylaldehyde derivatives carrying a saturated or an unsaturated C-7 side chain. The PKS fogA releases the carboxylic acid (8E,10E,12E)-3,5,7-trihydroxytetradeca-8,10,12-trienoic acid as its product, as well as derivatives with one and two double bonds. FogA is indeed able to reduce the initial triketide, thus being at least partially responsible for the differently saturated heptyl side chains of flavoglaucin congeners. The oxidoreductases fogB, fogC and fogD modify the nascent polyketide in fogA-bound form and, together, fogA, fogB, fogC and fogD are necessary for the formation of the aromatic core and the cyclized PKS products are released as salicyl alcohols. In particular, fogB is responsible for oxidation of a hydroxyl group or reduction of remaining double bond(s) at the C-7 residue whereas fogD is probably involved in the reductive release of the modified PKS products. The cytochrome P450 monooxygenase fogE is then responsible for the hydroxylation at C-3 of the benzene ring. The fogE products are substrates of the prenyltransferase fogH and the prenylated benzyl alcohols are subsequently oxidized by the fogF to produce the final aryl aldehydes flavoglaucin and congeners. The short-chain dehydrogenase fogG does not seem to be involved in the biosynthesis of the prenylated salicylaldehyde derivatives. This is Short-chain dehydrogenase fogG from Aspergillus ruber (strain CBS 135680).